We begin with the raw amino-acid sequence, 464 residues long: Maturase K (464 aa).

This sequence belongs to the intron maturase 2 family. MatK subfamily.

It localises to the plastid. Its subcellular location is the chloroplast. In terms of biological role, usually encoded in the trnK tRNA gene intron. Probably assists in splicing its own and other chloroplast group II introns. The sequence is that of Maturase K from Castanea crenata (Japanese chestnut).